The chain runs to 423 residues: Cyclin-dependent kinase 14 (423 aa).

The disordered stretch occupies residues 62–85 (VGKESPKVRRHSSPSSPTSPKFGK). Residues 89-373 (YEKLEKLGEG…AQAALNHDYF (285 aa)) enclose the Protein kinase domain. ATP-binding positions include 95 to 103 (LGEGSYATV) and Lys118. Asp210 serves as the catalytic Proton acceptor.

It belongs to the protein kinase superfamily. CMGC Ser/Thr protein kinase family. CDC2/CDKX subfamily. In terms of assembly, interacts with ccny; ccny mediates its recruitment to the plasma membrane and promotes phosphorylation of lrp6.

Its subcellular location is the cell membrane. It catalyses the reaction L-seryl-[protein] + ATP = O-phospho-L-seryl-[protein] + ADP + H(+). The catalysed reaction is L-threonyl-[protein] + ATP = O-phospho-L-threonyl-[protein] + ADP + H(+). Serine/threonine-protein kinase involved in the control of the eukaryotic cell cycle, whose activity is controlled by an associated cyclin. Acts as a cell-cycle regulator of Wnt signaling pathway during G2/M phase by mediating the phosphorylation of lrp6, leading to the activation of the Wnt signaling pathway. The protein is Cyclin-dependent kinase 14 (cdk14) of Xenopus tropicalis (Western clawed frog).